A 73-amino-acid chain; its full sequence is ATP synthase subunit c (73 aa).

A run of 2 helical transmembrane segments spans residues 4 to 24 and 51 to 71; these read LAIG…GIGI and GALA…IIIF.

This sequence belongs to the ATPase C chain family. In terms of assembly, F-type ATPases have 2 components, F(1) - the catalytic core - and F(0) - the membrane proton channel. F(1) has five subunits: alpha(3), beta(3), gamma(1), delta(1), epsilon(1). F(0) has three main subunits: a(1), b(2) and c(10-14). The alpha and beta chains form an alternating ring which encloses part of the gamma chain. F(1) is attached to F(0) by a central stalk formed by the gamma and epsilon chains, while a peripheral stalk is formed by the delta and b chains.

It is found in the cell membrane. Its function is as follows. F(1)F(0) ATP synthase produces ATP from ADP in the presence of a proton or sodium gradient. F-type ATPases consist of two structural domains, F(1) containing the extramembraneous catalytic core and F(0) containing the membrane proton channel, linked together by a central stalk and a peripheral stalk. During catalysis, ATP synthesis in the catalytic domain of F(1) is coupled via a rotary mechanism of the central stalk subunits to proton translocation. Functionally, key component of the F(0) channel; it plays a direct role in translocation across the membrane. A homomeric c-ring of between 10-14 subunits forms the central stalk rotor element with the F(1) delta and epsilon subunits. This is ATP synthase subunit c from Caldanaerobacter subterraneus subsp. tengcongensis (strain DSM 15242 / JCM 11007 / NBRC 100824 / MB4) (Thermoanaerobacter tengcongensis).